The primary structure comprises 691 residues: Serotransferrin-2 (691 aa).

The N-terminal stretch at 1–18 is a signal peptide; sequence MKLLLLSALLGCLATAYA. 2 Transferrin-like domains span residues 25–329 and 340–670; these read VKWC…SLKK and IKWC…SLRK. The cysteines at positions 28 and 50 are disulfide-linked. Fe(3+) is bound by residues D74 and Y104. Intrachain disulfides connect C127-C207, C172-C186, and C235-C249. Hydrogencarbonate contacts are provided by T129, S134, G136, and W137. An N-linked (GlcNAc...) asparagine glycan is attached at N169. Y201 lines the Fe(3+) pocket. Position 257 (H257) interacts with Fe(3+). Cystine bridges form between C343–C379 and C353–C370. D394 and Y428 together coordinate Fe(3+). 7 cysteine pairs are disulfide-bonded: C404–C682, C419–C643, C451–C530, C475–C671, C485–C499, C496–C513, and C570–C584. Hydrogencarbonate contacts are provided by T453, R457, A459, and G460. Fe(3+) is bound at residue Y524. Residue H592 participates in Fe(3+) binding.

This sequence belongs to the transferrin family. As to quaternary structure, monomer. In terms of tissue distribution, abundant in liver and serum with smaller amounts found in the stomach and kidney.

Its subcellular location is the secreted. Its function is as follows. Transferrins are iron binding transport proteins which can bind two Fe(3+) ions in association with the binding of an anion, usually bicarbonate. It is responsible for the transport of iron from sites of absorption and heme degradation to those of storage and utilization. Serum transferrin may also have a further role in stimulating cell proliferation. This Salmo salar (Atlantic salmon) protein is Serotransferrin-2 (tf2).